Consider the following 113-residue polypeptide: MGGSVIVIDSKAAWDAQLAKGKEEHKPIVVDFTATWCGPCKMIAPLFETLSNDYAGKVIFLKVDVDAVAAVAEAAGITAMPTFHVYKDGVKADDLVGASQDKLKALVAKHAAA.

In terms of domain architecture, Thioredoxin spans 2–112; that stretch reads GGSVIVIDSK…LKALVAKHAA (111 aa). Catalysis depends on nucleophile residues C37 and C40. C37 and C40 are disulfide-bonded.

This sequence belongs to the thioredoxin family. Plant H-type subfamily.

It localises to the cytoplasm. Functionally, participates in various redox reactions through the reversible oxidation of the active center dithiol to a disulfide. The H form is known to activate a number of cytosolic enzymes. This is Thioredoxin H-type (TRXH) from Chlamydomonas reinhardtii (Chlamydomonas smithii).